Here is a 427-residue protein sequence, read N- to C-terminus: Flotillin-1 (427 aa).

Residues Ser19, Ser163, and Ser385 each carry the phosphoserine modification. Phosphothreonine is present on Thr387.

The protein belongs to the band 7/mec-2 family. Flotillin subfamily. Heterooligomeric complex of flotillin-1 and flotillin-2 and caveolin-1 and caveolin-2. Interacts with ECPAS.

The protein resides in the cell membrane. It localises to the endosome. The protein localises to the membrane. It is found in the caveola. Its subcellular location is the melanosome. The protein resides in the membrane raft. Functionally, may act as a scaffolding protein within caveolar membranes, functionally participating in formation of caveolae or caveolae-like vesicles. The chain is Flotillin-1 (FLOT1) from Homo sapiens (Human).